The following is a 160-amino-acid chain: Large ribosomal subunit protein uL13 (160 aa).

It belongs to the universal ribosomal protein uL13 family. In terms of assembly, part of the 50S ribosomal subunit.

This protein is one of the early assembly proteins of the 50S ribosomal subunit, although it is not seen to bind rRNA by itself. It is important during the early stages of 50S assembly. The polypeptide is Large ribosomal subunit protein uL13 (Orientia tsutsugamushi (strain Boryong) (Rickettsia tsutsugamushi)).